We begin with the raw amino-acid sequence, 308 residues long: Porphobilinogen deaminase (308 aa).

Cys-240 carries the post-translational modification S-(dipyrrolylmethanemethyl)cysteine.

Belongs to the HMBS family. In terms of assembly, monomer. Requires dipyrromethane as cofactor.

The catalysed reaction is 4 porphobilinogen + H2O = hydroxymethylbilane + 4 NH4(+). The protein operates within porphyrin-containing compound metabolism; protoporphyrin-IX biosynthesis; coproporphyrinogen-III from 5-aminolevulinate: step 2/4. In terms of biological role, tetrapolymerization of the monopyrrole PBG into the hydroxymethylbilane pre-uroporphyrinogen in several discrete steps. This chain is Porphobilinogen deaminase, found in Campylobacter hominis (strain ATCC BAA-381 / DSM 21671 / CCUG 45161 / LMG 19568 / NCTC 13146 / CH001A).